The primary structure comprises 372 residues: Cytochrome b (372 aa).

The next 4 helical transmembrane spans lie at 25-45 (FGSMLLTCLALQTSTGFFLAI), 69-90 (WIIQNLHAIGASMFFICIYTHI), 105-125 (WLSGTMLLIMLMATSFFGYVL), and 170-190 (FFALHFILPFMIISLSSIHII). 2 residues coordinate heme b: histidine 75 and histidine 89. Heme b-binding residues include histidine 174 and histidine 188. Residue histidine 193 coordinates a ubiquinone. Transmembrane regions (helical) follow at residues 218–238 (YKDTLMITAMITSMLIIMSFM), 280–300 (LGGTLALLMSILILTTAPFTH), 312–332 (LTQIMFWTLIVTFITITWSAT), and 339–358 (FIFISQTASIIYFSFFIINP).

The protein belongs to the cytochrome b family. As to quaternary structure, the cytochrome bc1 complex contains 3 respiratory subunits (MT-CYB, CYC1 and UQCRFS1), 2 core proteins (UQCRC1 and UQCRC2) and probably 6 low-molecular weight proteins. Heme b serves as cofactor.

Its subcellular location is the mitochondrion inner membrane. In terms of biological role, component of the ubiquinol-cytochrome c reductase complex (complex III or cytochrome b-c1 complex) that is part of the mitochondrial respiratory chain. The b-c1 complex mediates electron transfer from ubiquinol to cytochrome c. Contributes to the generation of a proton gradient across the mitochondrial membrane that is then used for ATP synthesis. This Hydrophis semperi (Lake Taal snake) protein is Cytochrome b (MT-CYB).